The following is an 811-amino-acid chain: tRNA(Met) cytidine acetyltransferase TmcA (811 aa).

ATP-binding residues include glutamine 267 and arginine 439. The N-acetyltransferase domain maps to 473-662; it reads KKEVYLEEPD…GEFTAIVLKP (190 aa). Acetyl-CoA is bound by residues 589-591, glutamate 629, and arginine 636; that span reads IAT.

This sequence belongs to the TmcA family.

Its subcellular location is the cytoplasm. The enzyme catalyses cytidine(34) in elongator tRNA(Met) + acetyl-CoA + ATP + H2O = N(4)-acetylcytidine(34) in elongator tRNA(Met) + ADP + phosphate + CoA + H(+). It carries out the reaction a cytidine in RNA + acetyl-CoA + ATP + H2O = an N(4)-acetylcytidine in RNA + ADP + phosphate + CoA + H(+). It catalyses the reaction a cytidine in tRNA + acetyl-CoA + ATP + H2O = an N(4)-acetylcytidine in tRNA + ADP + phosphate + CoA + H(+). The catalysed reaction is a cytidine in mRNA + acetyl-CoA + ATP + H2O = an N(4)-acetylcytidine in mRNA + ADP + phosphate + CoA + H(+). In terms of biological role, catalyzes the formation of N(4)-acetylcytidine (ac(4)C) at the wobble position of tRNA(Met), by using acetyl-CoA as an acetyl donor and ATP (or GTP). Catalyzes the formation of 267 N(4)-acetylcytidine (ac(4)C) sites in RNA, almost always on the middle C of a CCG motif. Modifications are found in rRNA, ncRNA, mRNA and tRNA. More acetylation is observed at 95 than at 75 or 85 degrees Celsius. This chain is tRNA(Met) cytidine acetyltransferase TmcA, found in Thermococcus sp. (strain AM4).